The primary structure comprises 53 residues: Large ribosomal subunit protein bL33 (53 aa).

It belongs to the bacterial ribosomal protein bL33 family.

The sequence is that of Large ribosomal subunit protein bL33 from Malacoplasma penetrans (strain HF-2) (Mycoplasma penetrans).